The primary structure comprises 67 residues: MPQLDTSTWFTVILSMIISLFMLLQLKISSHSFYLDPKTMSLKTTKHNLPWENKWTKTYLPLSLHLH.

Residues 8-24 (TWFTVILSMIISLFMLL) form a helical membrane-spanning segment. An N6-acetyllysine; alternate modification is found at lysine 54. An N6-succinyllysine; alternate modification is found at lysine 54. Lysine 57 carries the N6-acetyllysine modification.

Belongs to the ATPase protein 8 family. As to quaternary structure, component of the ATP synthase complex composed at least of ATP5F1A/subunit alpha, ATP5F1B/subunit beta, ATP5MC1/subunit c (homooctomer), MT-ATP6/subunit a, MT-ATP8/subunit 8, ATP5ME/subunit e, ATP5MF/subunit f, ATP5MG/subunit g, ATP5MK/subunit k, ATP5MJ/subunit j, ATP5F1C/subunit gamma, ATP5F1D/subunit delta, ATP5F1E/subunit epsilon, ATP5PF/subunit F6, ATP5PB/subunit b, ATP5PD/subunit d, ATP5PO/subunit OSCP. ATP synthase complex consists of a soluble F(1) head domain (subunits alpha(3) and beta(3)) - the catalytic core - and a membrane F(0) domain - the membrane proton channel (subunits c, a, 8, e, f, g, k and j). These two domains are linked by a central stalk (subunits gamma, delta, and epsilon) rotating inside the F1 region and a stationary peripheral stalk (subunits F6, b, d, and OSCP). Interacts with PRICKLE3.

It localises to the mitochondrion membrane. Functionally, subunit 8, of the mitochondrial membrane ATP synthase complex (F(1)F(0) ATP synthase or Complex V) that produces ATP from ADP in the presence of a proton gradient across the membrane which is generated by electron transport complexes of the respiratory chain. ATP synthase complex consist of a soluble F(1) head domain - the catalytic core - and a membrane F(1) domain - the membrane proton channel. These two domains are linked by a central stalk rotating inside the F(1) region and a stationary peripheral stalk. During catalysis, ATP synthesis in the catalytic domain of F(1) is coupled via a rotary mechanism of the central stalk subunits to proton translocation. In vivo, can only synthesize ATP although its ATP hydrolase activity can be activated artificially in vitro. Part of the complex F(0) domain. The chain is ATP synthase F(0) complex subunit 8 from Cavia porcellus (Guinea pig).